The sequence spans 71 residues: Cell division protein ZapB (71 aa).

Positions 5–67 (LEVLEQLESK…RALLGKMDQM (63 aa)) form a coiled coil.

It belongs to the ZapB family. In terms of assembly, homodimer. The ends of the coiled-coil dimer bind to each other, forming polymers. Interacts with FtsZ.

Its subcellular location is the cytoplasm. Its function is as follows. Non-essential, abundant cell division factor that is required for proper Z-ring formation. It is recruited early to the divisome by direct interaction with FtsZ, stimulating Z-ring assembly and thereby promoting cell division earlier in the cell cycle. Its recruitment to the Z-ring requires functional FtsA or ZipA. The protein is Cell division protein ZapB of Aeromonas hydrophila subsp. hydrophila (strain ATCC 7966 / DSM 30187 / BCRC 13018 / CCUG 14551 / JCM 1027 / KCTC 2358 / NCIMB 9240 / NCTC 8049).